The primary structure comprises 132 residues: Agouti-signaling protein (132 aa).

The signal sequence occupies residues 1–22; the sequence is MDVTRLLLATLLVFLCFFTANS. N39 is a glycosylation site (N-linked (GlcNAc...) asparagine). The tract at residues 61 to 87 is disordered; it reads QIGRKEAEKKRSSKKEASMKKVARPRT. Residues 63–79 show a composition bias toward basic and acidic residues; sequence GRKEAEKKRSSKKEASM. 5 disulfides stabilise this stretch: C93-C108, C100-C114, C107-C125, C111-C132, and C116-C123. Positions 93–132 constitute an Agouti domain; that stretch reads CVATRNSCKPPAPACCDPCASCQCRFFRSACSCRVLSLNC.

Its subcellular location is the secreted. Functionally, involved in the regulation of melanogenesis. The binding of ASP to MC1R precludes alpha-MSH initiated signaling and thus blocks production of cAMP, leading to a down-regulation of eumelanogenesis (brown/black pigment) and thus increasing synthesis of pheomelanin (yellow/red pigment). The sequence is that of Agouti-signaling protein (ASIP) from Gorilla gorilla gorilla (Western lowland gorilla).